We begin with the raw amino-acid sequence, 155 residues long: 6,7-dimethyl-8-ribityllumazine synthase (155 aa).

5-amino-6-(D-ribitylamino)uracil-binding positions include Trp-23, 57–59 (AWE), and 81–83 (CVI). 86 to 87 (DT) serves as a coordination point for (2S)-2-hydroxy-3-oxobutyl phosphate. The Proton donor role is filled by His-89. Asn-114 provides a ligand contact to 5-amino-6-(D-ribitylamino)uracil. Position 128 (Arg-128) interacts with (2S)-2-hydroxy-3-oxobutyl phosphate.

Belongs to the DMRL synthase family. As to quaternary structure, forms an icosahedral capsid composed of 60 subunits, arranged as a dodecamer of pentamers.

The catalysed reaction is (2S)-2-hydroxy-3-oxobutyl phosphate + 5-amino-6-(D-ribitylamino)uracil = 6,7-dimethyl-8-(1-D-ribityl)lumazine + phosphate + 2 H2O + H(+). Its pathway is cofactor biosynthesis; riboflavin biosynthesis; riboflavin from 2-hydroxy-3-oxobutyl phosphate and 5-amino-6-(D-ribitylamino)uracil: step 1/2. In terms of biological role, catalyzes the formation of 6,7-dimethyl-8-ribityllumazine by condensation of 5-amino-6-(D-ribitylamino)uracil with 3,4-dihydroxy-2-butanone 4-phosphate. This is the penultimate step in the biosynthesis of riboflavin. In Stenotrophomonas maltophilia (strain K279a), this protein is 6,7-dimethyl-8-ribityllumazine synthase.